Consider the following 312-residue polypeptide: Zygote arrest protein 1.L (312 aa).

Disordered regions lie at residues 79 to 133 (RDVG…VRFP) and 150 to 205 (FQDK…DQTR). Polar residues-rich tracts occupy residues 86-95 (NPRQDASVQC) and 113-128 (PQQS…SPTK). Basic and acidic residues predominate over residues 152–196 (DKGENLSEKTEALRSEGSRGEGGRPEGKQEDGEIKEQTKMDKADQ). Residues 214 to 297 (KYGYYHCKDC…RQDLCGRCKG (84 aa)) form a 3CxxC-type zinc finger.

This sequence belongs to the ZAR1 family. As to expression, ovary.

It localises to the cytoplasm. The protein resides in the cytoplasmic ribonucleoprotein granule. Its function is as follows. mRNA-binding protein required for maternal mRNA storage, translation and degradation during oocyte maturation. Probably promotes formation of some phase-separated membraneless compartment that stores maternal mRNAs in oocytes: acts by undergoing liquid-liquid phase separation upon binding to maternal mRNAs. Binds to the 3'-UTR of maternal mRNAs in immature oocytes, inhibiting their translation. The chain is Zygote arrest protein 1.L from Xenopus laevis (African clawed frog).